Reading from the N-terminus, the 130-residue chain is Glycine cleavage system H protein (130 aa).

The Lipoyl-binding domain occupies 24-106 (TFTVGITDHA…YGDGWLYRIT (83 aa)). The residue at position 65 (Lys-65) is an N6-lipoyllysine.

It belongs to the GcvH family. The glycine cleavage system is composed of four proteins: P, T, L and H. (R)-lipoate is required as a cofactor.

The glycine cleavage system catalyzes the degradation of glycine. The H protein shuttles the methylamine group of glycine from the P protein to the T protein. The sequence is that of Glycine cleavage system H protein from Coxiella burnetii (strain CbuK_Q154) (Coxiella burnetii (strain Q154)).